The sequence spans 101 residues: NAD(P)H-quinone oxidoreductase subunit 4L, chloroplastic (101 aa).

3 helical membrane-spanning segments follow: residues 2–22 (ILEH…YGLI), 32–52 (MCLE…SDFF), and 61–81 (IFSI…LAIV).

The protein belongs to the complex I subunit 4L family. As to quaternary structure, NDH is composed of at least 16 different subunits, 5 of which are encoded in the nucleus.

Its subcellular location is the plastid. It is found in the chloroplast thylakoid membrane. The catalysed reaction is a plastoquinone + NADH + (n+1) H(+)(in) = a plastoquinol + NAD(+) + n H(+)(out). It carries out the reaction a plastoquinone + NADPH + (n+1) H(+)(in) = a plastoquinol + NADP(+) + n H(+)(out). Functionally, NDH shuttles electrons from NAD(P)H:plastoquinone, via FMN and iron-sulfur (Fe-S) centers, to quinones in the photosynthetic chain and possibly in a chloroplast respiratory chain. The immediate electron acceptor for the enzyme in this species is believed to be plastoquinone. Couples the redox reaction to proton translocation, and thus conserves the redox energy in a proton gradient. The chain is NAD(P)H-quinone oxidoreductase subunit 4L, chloroplastic from Eucalyptus globulus subsp. globulus (Tasmanian blue gum).